Here is a 147-residue protein sequence, read N- to C-terminus: Hemoglobin subunit delta (147 aa).

Positions 3–147 (HLTGEEKAAV…VANALAHKYH (145 aa)) constitute a Globin domain. Heme b is bound by residues His64 and His93.

The protein belongs to the globin family. As to quaternary structure, heterotetramer of two delta chains and two alpha chains. Red blood cells.

This Ailuropoda melanoleuca (Giant panda) protein is Hemoglobin subunit delta (HBD).